The sequence spans 188 residues: Pyridoxal 5'-phosphate synthase subunit PdxT (188 aa).

Residue 47–49 (GES) participates in L-glutamine binding. The Nucleophile role is filled by Cys-79. Residues Arg-105 and 134–135 (IR) each bind L-glutamine. Catalysis depends on charge relay system residues His-170 and Glu-172.

It belongs to the glutaminase PdxT/SNO family. As to quaternary structure, in the presence of PdxS, forms a dodecamer of heterodimers. Only shows activity in the heterodimer.

The catalysed reaction is aldehydo-D-ribose 5-phosphate + D-glyceraldehyde 3-phosphate + L-glutamine = pyridoxal 5'-phosphate + L-glutamate + phosphate + 3 H2O + H(+). It carries out the reaction L-glutamine + H2O = L-glutamate + NH4(+). It functions in the pathway cofactor biosynthesis; pyridoxal 5'-phosphate biosynthesis. Its function is as follows. Catalyzes the hydrolysis of glutamine to glutamate and ammonia as part of the biosynthesis of pyridoxal 5'-phosphate. The resulting ammonia molecule is channeled to the active site of PdxS. This is Pyridoxal 5'-phosphate synthase subunit PdxT from Listeria innocua serovar 6a (strain ATCC BAA-680 / CLIP 11262).